Reading from the N-terminus, the 754-residue chain is Relaxin receptor 2 (754 aa).

The Extracellular segment spans residues 1 to 416 (MIVFLVFKHL…SSFEDLLANN (416 aa)). The 38-residue stretch at 44-81 (SCQKGYFPCGNLTKCLPRAFHCDGKDDCGNGADEENCG) folds into the LDL-receptor class A domain. Disulfide bonds link Cys-45/Cys-58, Cys-52/Cys-71, and Cys-65/Cys-80. Residue Asn-54 is glycosylated (N-linked (GlcNAc...) asparagine). Asn-138 carries an N-linked (GlcNAc...) asparagine glycan. 10 LRR repeats span residues 138-159 (NVTL…VFIK), 162-183 (KLKK…AFFG), 186-207 (NLQI…IFKD), 210-231 (QLTW…LFTG), 234-255 (SLFF…MCAQ), 258-279 (QLNW…TFLS), 282-303 (SLTV…TFSS), 306-327 (NLGE…LFKD), 330-351 (LLQK…QFES), and 354-375 (QLQS…MFQP). Asn-274 carries an N-linked (GlcNAc...) asparagine glycan. N-linked (GlcNAc...) asparagine glycosylation occurs at Asn-335. A glycan (N-linked (GlcNAc...) asparagine) is linked at Asn-378. A helical transmembrane segment spans residues 417–437 (ILRIFVWVIAFITCFGNLFVI). Residues 438–455 (GMRSFIKAENTTHAMSIK) lie on the Cytoplasmic side of the membrane. A helical membrane pass occupies residues 456–476 (ILCCADCLMGVYLFFVGIFDI). The Extracellular segment spans residues 477–495 (KYRGQYQKYALLWMESVQC). A disulfide bridge connects residues Cys-495 and Cys-573. The helical transmembrane segment at 496-518 (RLMGFLAMLSTEVSVLLLTYLTL) threads the bilayer. The Cytoplasmic segment spans residues 519 to 537 (EKFLVIVFPFSNIRPGKRQ). The chain crosses the membrane as a helical span at residues 538–558 (TSVILICIWMAGFLIAVIPFW). Residues 559-592 (NKDYFGNFYGKNGVCFPLYYDQTEDIGSKGYSLG) lie on the Extracellular side of the membrane. Residues 593–613 (IFLGVNLLAFLIIVFSYITMF) form a helical membrane-spanning segment. Topologically, residues 614 to 639 (CSIQKTALQTTEVRNCFGREVAVANR) are cytoplasmic. A helical transmembrane segment spans residues 640 to 660 (FFFIVFSDAICWIPVFVVKIL). The Extracellular segment spans residues 661-670 (SLFRVEIPDT). The chain crosses the membrane as a helical span at residues 671-691 (MTSWIVIFFLPVNSALNPILY). The Cytoplasmic segment spans residues 692–754 (TLTTNFFKDK…LGDSIMKPVS (63 aa)).

Belongs to the G-protein coupled receptor 1 family. Expressed mainly in the brain, kidney, muscle, testis, thyroid, uterus, peripheral blood cells and bone marrow.

It is found in the cell membrane. Receptor for relaxin. The activity of this receptor is mediated by G proteins leading to stimulation of adenylate cyclase and an increase of cAMP. May also be a receptor for Leydig insulin-like peptide (INSL3). This Homo sapiens (Human) protein is Relaxin receptor 2 (RXFP2).